The sequence spans 463 residues: Lactadherin (463 aa).

An N-terminal signal peptide occupies residues 1 to 22 (MQVSRVLAALCGMLLCASGLFA). 2 consecutive EGF-like domains span residues 24–61 (SGDF…LVCN) and 64–108 (ERGP…IHCE). 3 cysteine pairs are disulfide-bonded: C28–C39, C33–C49, and C51–C60. The N-linked (GlcNAc...) asparagine glycan is linked to N61. 6 disulfides stabilise this stretch: C68–C79, C73–C96, C98–C107, C148–C303, C290–C294, and C308–C463. The Cell attachment site signature appears at 87-89 (RGD). F5/8 type C domains follow at residues 148-303 (CSTQ…LLGC) and 308-463 (CSEP…LLGC). N-linked (GlcNAc...) asparagine glycosylation occurs at N266. N-linked (GlcNAc...) asparagine glycosylation is found at N316 and N426.

N-glycosylated. Isoform 1 also exists in both an O-glycosylated and a non-O-glycosylated form. Mammary epithelial cell surfaces and spermatozoan. Isoform 2 is present in brain, heart, kidney and spleen and at low levels in lung, liver, small intestine and testis.

Its subcellular location is the membrane. It is found in the secreted. The protein localises to the cytoplasmic vesicle. It localises to the secretory vesicle. The protein resides in the acrosome membrane. Its function is as follows. Contributes to phagocytic removal of apoptotic cells in many tissues. Specific ligand for the alpha-v/beta-3 and alpha-v/beta-5 receptors. Also binds to phosphatidylserine-enriched cell surfaces in a receptor-independent manner. Zona pellucida-binding protein which may play a role in gamete interaction. Plays an important role in the maintenance of intestinal epithelial homeostasis and the promotion of mucosal healing. Promotes VEGF-dependent neovascularization. The protein is Lactadherin (Mfge8) of Mus musculus (Mouse).